Consider the following 232-residue polypeptide: LOB domain-containing protein 11 (232 aa).

Residues Met-1–Pro-50 form a disordered region. Positions Thr-34–Pro-50 are enriched in pro residues. The LOB domain maps to Ser-54 to Leu-155. The segment at Glu-181 to Asn-218 is disordered. The span at Ser-188–Ser-202 shows a compositional bias: low complexity.

The protein belongs to the LOB domain-containing protein family. As to expression, expressed in young shoots, stems, leaves and flowers.

The polypeptide is LOB domain-containing protein 11 (LBD11) (Arabidopsis thaliana (Mouse-ear cress)).